A 295-amino-acid chain; its full sequence is Enolase-phosphatase E1 (295 aa).

Mg(2+) is bound by residues aspartate 20 and glutamate 22. Substrate is bound by residues 153–154 and lysine 187; that span reads SS. Aspartate 212 lines the Mg(2+) pocket. The tract at residues 260 to 295 is disordered; sequence ETKEENGGATNGKRKIEETNDDVAEEDKAQVYPNKK.

It belongs to the HAD-like hydrolase superfamily. MasA/MtnC family. Monomer. Mg(2+) is required as a cofactor.

The protein resides in the cytoplasm. The protein localises to the nucleus. The enzyme catalyses 5-methylsulfanyl-2,3-dioxopentyl phosphate + H2O = 1,2-dihydroxy-5-(methylsulfanyl)pent-1-en-3-one + phosphate. It functions in the pathway amino-acid biosynthesis; L-methionine biosynthesis via salvage pathway; L-methionine from S-methyl-5-thio-alpha-D-ribose 1-phosphate: step 3/6. The protein operates within amino-acid biosynthesis; L-methionine biosynthesis via salvage pathway; L-methionine from S-methyl-5-thio-alpha-D-ribose 1-phosphate: step 4/6. Its function is as follows. Bifunctional enzyme that catalyzes the enolization of 2,3-diketo-5-methylthiopentyl-1-phosphate (DK-MTP-1-P) into the intermediate 2-hydroxy-3-keto-5-methylthiopentenyl-1-phosphate (HK-MTPenyl-1-P), which is then dephosphorylated to form the acireductone 1,2-dihydroxy-3-keto-5-methylthiopentene (DHK-MTPene). The chain is Enolase-phosphatase E1 from Anopheles gambiae (African malaria mosquito).